Here is a 540-residue protein sequence, read N- to C-terminus: Serine/threonine-protein phosphatase ppzA (540 aa).

2 disordered regions span residues 1 to 108 (MGQS…KRGH) and 120 to 140 (VDHV…STQK). Polar residues-rich tracts occupy residues 15 to 24 (SLQSYPSFSR) and 45 to 54 (SDSPRGSTAG). The span at 62–88 (AASVKSTTSRRSSTNQSVQSPDDTPSQ) shows a compositional bias: low complexity. A compositionally biased stretch (pro residues) spans 89–98 (PDAPEPPPSP). Low complexity predominate over residues 127–136 (PPTGAAPTGP). The Mn(2+) site is built by aspartate 239, histidine 241, aspartate 267, and asparagine 299. The Phosphatase tensin-type domain maps to 258-540 (PASNYLFLGD…SLVTSWGISR (283 aa)). The active-site Proton donor is histidine 300. The Mn(2+) site is built by histidine 348 and histidine 423.

Belongs to the PPP phosphatase family. PP-Z subfamily. As to quaternary structure, interacts with at least 54 proteins, of which 31 are detected only after iron starvation and 22 are detected only in control conditions. Only the regulatory subunit of the protein phosphatase PP1 (Afu1g04800/AFUB_005140) interacts with ppzA in both conditions. Requires Mn(2+) as cofactor.

It localises to the cytoplasm. The catalysed reaction is O-phospho-L-seryl-[protein] + H2O = L-seryl-[protein] + phosphate. The enzyme catalyses O-phospho-L-threonyl-[protein] + H2O = L-threonyl-[protein] + phosphate. Catalytic subunit of protein phosphatase Z (PPZ) involved in iron assimilation. Regulates secondary metabolites production, including gliotoxin, pyripyropene A, fumagillin, fumiquinazoline A, triacetyl-fusarinine C, and helvolic acid. Plays a key role in pathogenicity. In Aspergillus fumigatus (strain CBS 144.89 / FGSC A1163 / CEA10) (Neosartorya fumigata), this protein is Serine/threonine-protein phosphatase ppzA.